A 420-amino-acid chain; its full sequence is UDP-N-acetylglucosamine 1-carboxyvinyltransferase (420 aa).

22–23 serves as a coordination point for phosphoenolpyruvate; the sequence is KN. Arg-93 is a binding site for UDP-N-acetyl-alpha-D-glucosamine. Cys-117 (proton donor) is an active-site residue. At Cys-117 the chain carries 2-(S-cysteinyl)pyruvic acid O-phosphothioketal. 2 residues coordinate UDP-N-acetyl-alpha-D-glucosamine: Asp-307 and Ile-329.

The protein belongs to the EPSP synthase family. MurA subfamily.

The protein resides in the cytoplasm. It carries out the reaction phosphoenolpyruvate + UDP-N-acetyl-alpha-D-glucosamine = UDP-N-acetyl-3-O-(1-carboxyvinyl)-alpha-D-glucosamine + phosphate. It functions in the pathway cell wall biogenesis; peptidoglycan biosynthesis. Cell wall formation. Adds enolpyruvyl to UDP-N-acetylglucosamine. This is UDP-N-acetylglucosamine 1-carboxyvinyltransferase from Alteromonas mediterranea (strain DSM 17117 / CIP 110805 / LMG 28347 / Deep ecotype).